A 165-amino-acid polypeptide reads, in one-letter code: Putative TRAP transporter small permease protein HI_0051 (165 aa).

4 helical membrane-spanning segments follow: residues 20 to 40, 51 to 71, 94 to 114, and 136 to 156; these read LEYL…FNSV, FSEE…IILV, IVLI…AYGA, and LYLA…FSMI.

The protein belongs to the TRAP transporter small permease family.

It localises to the cell inner membrane. The chain is Putative TRAP transporter small permease protein HI_0051 from Haemophilus influenzae (strain ATCC 51907 / DSM 11121 / KW20 / Rd).